We begin with the raw amino-acid sequence, 226 residues long: Biosynthetic peptidoglycan transglycosylase (226 aa).

Residues 10–30 (IIMTLLALLILPYLLIPVYAL) form a helical membrane-spanning segment.

Belongs to the glycosyltransferase 51 family.

It is found in the cell inner membrane. It catalyses the reaction [GlcNAc-(1-&gt;4)-Mur2Ac(oyl-L-Ala-gamma-D-Glu-L-Lys-D-Ala-D-Ala)](n)-di-trans,octa-cis-undecaprenyl diphosphate + beta-D-GlcNAc-(1-&gt;4)-Mur2Ac(oyl-L-Ala-gamma-D-Glu-L-Lys-D-Ala-D-Ala)-di-trans,octa-cis-undecaprenyl diphosphate = [GlcNAc-(1-&gt;4)-Mur2Ac(oyl-L-Ala-gamma-D-Glu-L-Lys-D-Ala-D-Ala)](n+1)-di-trans,octa-cis-undecaprenyl diphosphate + di-trans,octa-cis-undecaprenyl diphosphate + H(+). Its pathway is cell wall biogenesis; peptidoglycan biosynthesis. Peptidoglycan polymerase that catalyzes glycan chain elongation from lipid-linked precursors. In Agrobacterium fabrum (strain C58 / ATCC 33970) (Agrobacterium tumefaciens (strain C58)), this protein is Biosynthetic peptidoglycan transglycosylase.